The chain runs to 237 residues: 2-C-methyl-D-erythritol 4-phosphate cytidylyltransferase (237 aa).

It belongs to the IspD/TarI cytidylyltransferase family. IspD subfamily. In terms of assembly, homodimer.

The enzyme catalyses 2-C-methyl-D-erythritol 4-phosphate + CTP + H(+) = 4-CDP-2-C-methyl-D-erythritol + diphosphate. It participates in isoprenoid biosynthesis; isopentenyl diphosphate biosynthesis via DXP pathway; isopentenyl diphosphate from 1-deoxy-D-xylulose 5-phosphate: step 2/6. Catalyzes the formation of 4-diphosphocytidyl-2-C-methyl-D-erythritol from CTP and 2-C-methyl-D-erythritol 4-phosphate (MEP). This Pectobacterium atrosepticum (strain SCRI 1043 / ATCC BAA-672) (Erwinia carotovora subsp. atroseptica) protein is 2-C-methyl-D-erythritol 4-phosphate cytidylyltransferase.